A 157-amino-acid polypeptide reads, in one-letter code: SsrA-binding protein (157 aa).

It belongs to the SmpB family.

Its subcellular location is the cytoplasm. Required for rescue of stalled ribosomes mediated by trans-translation. Binds to transfer-messenger RNA (tmRNA), required for stable association of tmRNA with ribosomes. tmRNA and SmpB together mimic tRNA shape, replacing the anticodon stem-loop with SmpB. tmRNA is encoded by the ssrA gene; the 2 termini fold to resemble tRNA(Ala) and it encodes a 'tag peptide', a short internal open reading frame. During trans-translation Ala-aminoacylated tmRNA acts like a tRNA, entering the A-site of stalled ribosomes, displacing the stalled mRNA. The ribosome then switches to translate the ORF on the tmRNA; the nascent peptide is terminated with the 'tag peptide' encoded by the tmRNA and targeted for degradation. The ribosome is freed to recommence translation, which seems to be the essential function of trans-translation. The sequence is that of SsrA-binding protein from Chlorobium phaeovibrioides (strain DSM 265 / 1930) (Prosthecochloris vibrioformis (strain DSM 265)).